A 2270-amino-acid polypeptide reads, in one-letter code: Protein DOP1B (2270 aa).

Disordered stretches follow at residues 548–572 (METPSSDTDPLKESENNPAPEVEGE), 697–716 (LKQRSEQSPNKTTNKETEEE), and 1084–1145 (QEQD…DMPR). Polar residues predominate over residues 1095 to 1145 (ADTSTGHNDSDNTSSFTPSSVDLSSDQNYRDNTAGQVTHKNTGQQNMDMPR).

Belongs to the DOP1 family.

Its subcellular location is the golgi apparatus membrane. In terms of biological role, may be involved in protein traffic between late Golgi and early endosomes. This Xenopus laevis (African clawed frog) protein is Protein DOP1B (dop1b).